The chain runs to 622 residues: Basal cell adhesion molecule (622 aa).

A signal peptide spans 1–25; the sequence is MEPPDARAGLLWLTFLLSGYSGAQA. 2 consecutive Ig-like V-type domains span residues 26 to 135 and 140 to 250; these read ELHV…SSVR and PEDT…HTFR. Residues 26–541 lie on the Extracellular side of the membrane; it reads ELHVSVPPRV…GSVAPQTAQA (516 aa). Cystine bridges form between Cys47–Cys118, Cys165–Cys230, and Cys284–Cys330. 3 consecutive Ig-like C2-type domains span residues 267–342, 356–435, and 442–532; these read PSTT…EEVQ, PLEL…QSFQ, and PELK…FHFG. 4 N-linked (GlcNAc...) asparagine glycosylation sites follow: Asn314, Asn323, Asn370, and Asn377. 2 disulfides stabilise this stretch: Cys378-Cys418 and Cys467-Cys516. Residues 542–562 traverse the membrane as a helical segment; that stretch reads GVAVMAVAVSVGLLLLVVAAF. The Cytoplasmic portion of the chain corresponds to 563-622; sequence YCMRRKGRPGCCRRAEKGAPPAREPELSHSGSERPEHTGLLMGGPSGGGRGGSGGFGDEC. Positions 574-622 are disordered; it reads CRRAEKGAPPAREPELSHSGSERPEHTGLLMGGPSGGGRGGSGGFGDEC. Residues 575 to 599 show a composition bias toward basic and acidic residues; sequence RRAEKGAPPAREPELSHSGSERPEH. Residues Ser590, Ser592, Ser594, and Ser615 each carry the phosphoserine modification. Residues 603-622 show a composition bias toward gly residues; sequence LMGGPSGGGRGGSGGFGDEC.

Homodimer. Interacts with ITGA4:ITGB1. Interacts with spectrins SPTA1 and SPTB1. Post-translationally, epinephrine-stimulated phosphorylation of Ser-615 by PKA enhances adhesion to laminin. Ser-615 can also be phosphorylated by AKT1.

It is found in the cell membrane. Transmembrane glycoprotein that functions as both a receptor and an adhesion molecule playing a crucial role in cell adhesion, motility, migration and invasion. Extracellular domain enables binding to extracellular matrix proteins, such as laminin, integrin and other ligands while its intracellular domain interacts with cytoskeletal proteins like hemoglobin, facilitating cell signal transduction. Serves as a receptor for laminin alpha-5/LAMA5 to promote cell adhesion. Mechanistically, JAK2 induces BCAM phosphorylation and activates its adhesion to laminin by stimulating a Rap1/AKT signaling pathway in the absence of EPOR. This chain is Basal cell adhesion molecule (Bcam), found in Mus musculus (Mouse).